The sequence spans 358 residues: Methylthioribose-1-phosphate isomerase (358 aa).

Substrate-binding positions include 54-56 (RGA), arginine 96, and glutamine 205. The Proton donor role is filled by aspartate 246. 256–257 (NK) is a binding site for substrate.

The protein belongs to the eIF-2B alpha/beta/delta subunits family. MtnA subfamily.

It carries out the reaction 5-(methylsulfanyl)-alpha-D-ribose 1-phosphate = 5-(methylsulfanyl)-D-ribulose 1-phosphate. Its pathway is amino-acid biosynthesis; L-methionine biosynthesis via salvage pathway; L-methionine from S-methyl-5-thio-alpha-D-ribose 1-phosphate: step 1/6. Catalyzes the interconversion of methylthioribose-1-phosphate (MTR-1-P) into methylthioribulose-1-phosphate (MTRu-1-P). The chain is Methylthioribose-1-phosphate isomerase from Pseudomonas syringae pv. tomato (strain ATCC BAA-871 / DC3000).